A 200-amino-acid polypeptide reads, in one-letter code: uncharacterized protein (200 aa).

This is an uncharacterized protein from Saccharomyces cerevisiae (strain ATCC 204508 / S288c) (Baker's yeast).